The chain runs to 419 residues: ADIPOR-like receptor IZH3 (419 aa).

Residues 1 to 65 (MSHPNTHMPR…GEAGGGRSVL (65 aa)) are disordered. The Lumenal portion of the chain corresponds to 1–147 (MSHPNTHMPR…LNAYGWHNET (147 aa)). The N-linked (GlcNAc...) asparagine glycan is linked to Asn145. The helical transmembrane segment at 148-168 (INIWSHLVGAAVLAYLLCWGW) threads the bilayer. The Cytoplasmic portion of the chain corresponds to 169–184 (PRSDVYRAAQVPRLAK). The chain crosses the membrane as a helical span at residues 185–205 (WAIGAFLACGVKCMASSVAWH). Over 206-225 (TFNGTCHLKLRSRFVCVDYT) the chain is Lumenal. The N-linked (GlcNAc...) asparagine glycan is linked to Asn208. Residues 226 to 246 (GITLLVTASVVTTVAVTLYGL) form a helical membrane-spanning segment. Topologically, residues 247 to 249 (SRP) are cytoplasmic. Residues 250-270 (LMYAYMVASIGLGTAAGVMNW) traverse the membrane as a helical segment. At 271–283 (SPHFDRPEARPLR) the chain is on the lumenal side. The helical transmembrane segment at 284–304 (IAVYVGLAALGLVSFVHVWMQ) threads the bilayer. At 305-311 (VRWASAH) the chain is on the cytoplasmic side. A helical transmembrane segment spans residues 312–332 (LMAPLVYKSLVWYGIGVVFYA). At 333 to 377 (TLVPERWRSDVTLDCCSGPVHEAACRQFRDLPPVARKDRQFWSLW) the chain is on the lumenal side. A helical transmembrane segment spans residues 378-398 (WVDYFCHSHFLWHVFVVLGVV). Topologically, residues 399–419 (GHYRAVLQMSRIVWLDAGRAF) are cytoplasmic.

This sequence belongs to the ADIPOR family.

The protein localises to the endoplasmic reticulum membrane. In terms of biological role, ADIPOR-like receptor involved in zinc metabolism either by altering membrane sterol content or by directly altering cellular zinc levels. In Eremothecium gossypii (strain ATCC 10895 / CBS 109.51 / FGSC 9923 / NRRL Y-1056) (Yeast), this protein is ADIPOR-like receptor IZH3 (IZH3).